Consider the following 1491-residue polypeptide: MIERGKYQSLTMINWNGFFARTFDIDNLVTTLSGGNGAGKSTTMAAFITALIPDQSLLHFRNTTEAGSSQASRDKGLYGKLQAGACYAALDVVNSRNQRLLFAVKLQQVAGRDKKVDIKPFLIQGLPSHVKPTDVLVETVSDKHARVRQINEVKDAVGQIEGAHFKSFPSIVDYHAQMFEFGVIPKKLRNSSDRSKFYRLIEASLYGGISSAITRSLRDYLLPQNGGVKKAFQDMESALRENRMTLEAIKTTQADRDLFKHLITESTNYVAADYMRHANDRRNKVGQTLVLRGELFSSRETLIEQNSLLNRVHEELELLVEQESALEQDYQGASDHLQLVQNALRQQEKIERYQEDLEELNFRLEEQMMVVEEANERVMQAEERAIISEEEVDSLKSQLADYQQALDVQQTRALQYQQAVQALDKARRLLDKSELTAESAQALATQLKAEQETRTSELLALKHKLDMSSAAAQQFNHAFELVKRVLGEVARSEAAKQAQQVIRQAREAQNVVQNEAQWQAQQRDLERQLEQQRSVRELATQYHKQHRVVLDDAATVELERERHSALLEELETEQENCREQRGQLRHQEQELQTQIARFESIAPAWIKANDALETLREQSGAELADSQSVMAHMQQVLELEKAQSMAKDKLAERRTKLDSEIERLASPGGSNDPRLKGLADTLGGVLLSEIYDDITIDDAPYFSAMYGPARHAIVVSDLSGIKEKLVELDDCPEDLYLIEGDVDAFDDSSFNAEELEGAVCVQLNQRQMRYSRFPAIPLFGRAAREQRLELLREERDDVVEQHAKASFDSQKLQRLYASFNQFVAMHLQVAFDADPEQALATARDKRNQLLRSISEFEAQEQQLRSQLQASKQALAALDKLAPQMGLLDEETLEARYHELEEKLQQLSEAKAFIAAHGRTISELEKVAAVLDADPEQFDALEQQYQQADQALQQLKAQIFALSDLLERRHHFAYSDSVDLLNQSSELSEQLKAKLVQAESERTRSREELKQAQAQLSQYNQLLASLKSSHQAKLETVQEFKQELQEFGVHADEGAIERAQRRRDELQERLHTSRSRKSEYERTITSTELEMKALVKRMKKVEKDYQDLRTFVVNAKAGWCSVLRLARQNDVERRLHKRELAYLSADELRSMSDKSLGALRLAVANNEDLRDALRQSEDNSRPERKVLFYIAVYQHLRERIRQDIIRTDDPVEAIEEMEVELARLTEELTQREQRLAISSDSVASIIRKTIQREQNRIRMLNQGLSNISFGQVNGVRLNVKVRESHEILLAGLSEQQAQHKDLFESARYTFSEAMAKLFQRVNPHIDMGQRSPQVLGEELLDYRNYLELSVEVNRGSDGWLQAESGALSTGEAIGTGQSILLMVVQSWEEESRRLRSKDIVPCRLLFLDEAARLDAKSIATLFELCERLDMQLLIAAPENISPEKGTTYKLVRKVFKDHEHVHVVGLRGFAQTEKPKTAEQKFAEELAGELTE.

34 to 41 serves as a coordination point for ATP; that stretch reads GGNGAGKS. Coiled coils occupy residues 302–450, 490–600, 781–806, 836–1109, and 1210–1239; these read LIEQ…LKAE, ARSE…RFES, RAAR…AKAS, EQAL…DLRT, and VEAI…ISSD. Residues 667-784 are flexible hinge; the sequence is PGGSNDPRLK…AIPLFGRAAR (118 aa). Residues 1059-1080 form a disordered region; that stretch reads QRRRDELQERLHTSRSRKSEYE.

The protein belongs to the SMC family. MukB subfamily. Homodimerization via its hinge domain. Binds to DNA via its C-terminal region. Interacts, and probably forms a ternary complex, with MukE and MukF via its C-terminal region. The complex formation is stimulated by calcium or magnesium. Interacts with tubulin-related protein FtsZ.

The protein resides in the cytoplasm. The protein localises to the nucleoid. Plays a central role in chromosome condensation, segregation and cell cycle progression. Functions as a homodimer, which is essential for chromosome partition. Involved in negative DNA supercoiling in vivo, and by this means organize and compact chromosomes. May achieve or facilitate chromosome segregation by condensation DNA from both sides of a centrally located replisome during cell division. This chain is Chromosome partition protein MukB, found in Vibrio cholerae serotype O1 (strain ATCC 39315 / El Tor Inaba N16961).